A 51-amino-acid polypeptide reads, in one-letter code: Large ribosomal subunit protein bL33 (51 aa).

The protein belongs to the bacterial ribosomal protein bL33 family.

The polypeptide is Large ribosomal subunit protein bL33 (Ruthia magnifica subsp. Calyptogena magnifica).